A 66-amino-acid polypeptide reads, in one-letter code: Large ribosomal subunit protein bL32 (66 aa).

Belongs to the bacterial ribosomal protein bL32 family.

The chain is Large ribosomal subunit protein bL32 from Rickettsia akari (strain Hartford).